The chain runs to 465 residues: Fusarisetin A cluster transcription factor fsa5 (465 aa).

The zn(2)-C6 fungal-type DNA-binding region spans 13–47 (CDRCRSHKLKCTVAPENTRSGSSRCTRCIRAQVTC). The interval 58 to 88 (STNVKKADLRSGTNGQETTSMQASTIVPGSP) is disordered. Residues 68 to 84 (SGTNGQETTSMQASTIV) are compositionally biased toward polar residues.

The protein localises to the nucleus. Its function is as follows. Transcription activator that specifically regulates the expression of the gene cluster that mediates the biosynthesis of fusarisetin A. The polypeptide is Fusarisetin A cluster transcription factor fsa5 (Fusarium sp. (strain FN080326)).